We begin with the raw amino-acid sequence, 438 residues long: MPISKIHARSVYDSRGNPTVEVDVVTETGLHRAIVPSGASTGQHEAHELRDGDKTQWGGKGVLKAVKNVNETIGPALIKENIDVKDQSKVDEFLNKLDGTANKSNLGANAILGVSLAVAKAGAAEKGVPLYAHISDLAGTKKPYVLPVPFQNVLNGGSHAGGRLAFQEFMIVPDSAPSFSEALRQGAEVYQKLKALAKKKYGQSAGNVGDEGGVAPDIQTAEEALDLITEAIEQAGYTGKIKIAMDVASSEFYKADVKKYDLDFKNPESDPSKWLTYEQLADLYKSLAAKYPIVSIEDPFAEDDWEAWSYFYKTSDFQIVGDDLTVTNPGRIKKAIELKSCNALLLKVNQIGTLTESIQAAKDSYADNWGVMVSHRSGETEDVTIADIAVGLRSGQIKTGAPCRSERLAKLNQILRIEEELGENAVYAGSKFRTAVNL.

Residues His-159 and Glu-168 each coordinate substrate. The Proton donor role is filled by Glu-211. Residues Asp-246, Glu-297, and Asp-322 each coordinate Mg(2+). Glu-297 and Asp-322 together coordinate substrate. Lys-347 acts as the Proton acceptor in catalysis. Residues Ser-374–Ser-377 and Lys-398 each bind substrate.

It belongs to the enolase family. In terms of assembly, homodimer. Requires Mg(2+) as cofactor.

It is found in the cytoplasm. It catalyses the reaction (2R)-2-phosphoglycerate = phosphoenolpyruvate + H2O. The protein operates within carbohydrate degradation; glycolysis; pyruvate from D-glyceraldehyde 3-phosphate: step 4/5. This Aspergillus fumigatus (strain ATCC MYA-4609 / CBS 101355 / FGSC A1100 / Af293) (Neosartorya fumigata) protein is Enolase (enoA).